A 194-amino-acid polypeptide reads, in one-letter code: Crossover junction endodeoxyribonuclease RuvC (194 aa).

Active-site residues include Asp8, Glu72, and Asp144. Mg(2+)-binding residues include Asp8, Glu72, and Asp144.

The protein belongs to the RuvC family. As to quaternary structure, homodimer which binds Holliday junction (HJ) DNA. The HJ becomes 2-fold symmetrical on binding to RuvC with unstacked arms; it has a different conformation from HJ DNA in complex with RuvA. In the full resolvosome a probable DNA-RuvA(4)-RuvB(12)-RuvC(2) complex forms which resolves the HJ. The cofactor is Mg(2+).

The protein resides in the cytoplasm. The catalysed reaction is Endonucleolytic cleavage at a junction such as a reciprocal single-stranded crossover between two homologous DNA duplexes (Holliday junction).. Functionally, the RuvA-RuvB-RuvC complex processes Holliday junction (HJ) DNA during genetic recombination and DNA repair. Endonuclease that resolves HJ intermediates. Cleaves cruciform DNA by making single-stranded nicks across the HJ at symmetrical positions within the homologous arms, yielding a 5'-phosphate and a 3'-hydroxyl group; requires a central core of homology in the junction. The consensus cleavage sequence is 5'-(A/T)TT(C/G)-3'. Cleavage occurs on the 3'-side of the TT dinucleotide at the point of strand exchange. HJ branch migration catalyzed by RuvA-RuvB allows RuvC to scan DNA until it finds its consensus sequence, where it cleaves and resolves the cruciform DNA. The polypeptide is Crossover junction endodeoxyribonuclease RuvC (Psychrobacter sp. (strain PRwf-1)).